The following is a 331-amino-acid chain: Biotin synthase (331 aa).

Residues 39–264 (SELQTCYLVS…VFPQSMVRLA (226 aa)) form the Radical SAM core domain. Cys-54, Cys-58, and Cys-61 together coordinate [4Fe-4S] cluster. Residues Cys-98, Cys-130, Cys-190, and Arg-262 each contribute to the [2Fe-2S] cluster site.

The protein belongs to the radical SAM superfamily. Biotin synthase family. As to quaternary structure, homodimer. [4Fe-4S] cluster serves as cofactor. The cofactor is [2Fe-2S] cluster.

The catalysed reaction is (4R,5S)-dethiobiotin + (sulfur carrier)-SH + 2 reduced [2Fe-2S]-[ferredoxin] + 2 S-adenosyl-L-methionine = (sulfur carrier)-H + biotin + 2 5'-deoxyadenosine + 2 L-methionine + 2 oxidized [2Fe-2S]-[ferredoxin]. The protein operates within cofactor biosynthesis; biotin biosynthesis; biotin from 7,8-diaminononanoate: step 2/2. Catalyzes the conversion of dethiobiotin (DTB) to biotin by the insertion of a sulfur atom into dethiobiotin via a radical-based mechanism. This is Biotin synthase from Chlamydia abortus (strain DSM 27085 / S26/3) (Chlamydophila abortus).